We begin with the raw amino-acid sequence, 375 residues long: Erythronate-4-phosphate dehydrogenase (375 aa).

Substrate is bound by residues Ser-45 and Thr-67. Asp-147 contacts NAD(+). The active site involves Arg-209. Position 233 (Asp-233) interacts with NAD(+). Glu-238 is a catalytic residue. Residue His-255 is the Proton donor of the active site. Residue Gly-258 coordinates NAD(+). Position 259 (Tyr-259) interacts with substrate.

The protein belongs to the D-isomer specific 2-hydroxyacid dehydrogenase family. PdxB subfamily. Homodimer.

Its subcellular location is the cytoplasm. It carries out the reaction 4-phospho-D-erythronate + NAD(+) = (R)-3-hydroxy-2-oxo-4-phosphooxybutanoate + NADH + H(+). It functions in the pathway cofactor biosynthesis; pyridoxine 5'-phosphate biosynthesis; pyridoxine 5'-phosphate from D-erythrose 4-phosphate: step 2/5. Catalyzes the oxidation of erythronate-4-phosphate to 3-hydroxy-2-oxo-4-phosphonooxybutanoate. The sequence is that of Erythronate-4-phosphate dehydrogenase from Shewanella amazonensis (strain ATCC BAA-1098 / SB2B).